Here is an 88-residue protein sequence, read N- to C-terminus: Prolevitide (88 aa).

Residues 1-20 form the signal peptide; sequence MYKGIFLCVLFAVICANSLA. Residue Gln74 is modified to Pyrrolidone carboxylic acid. Residue Gln87 is modified to Glutamine amide.

Belongs to the gastrin/cholecystokinin family. Expressed by the skin glands.

It localises to the secreted. In Xenopus laevis (African clawed frog), this protein is Prolevitide.